A 207-amino-acid polypeptide reads, in one-letter code: Large ribosomal subunit protein eL13 (207 aa).

The protein belongs to the eukaryotic ribosomal protein eL13 family. In terms of assembly, component of the 60S large ribosomal subunit (LSU).

The protein resides in the cytoplasm. Functionally, component of the ribosome, a large ribonucleoprotein complex responsible for the synthesis of proteins in the cell. The small ribosomal subunit (SSU) binds messenger RNAs (mRNAs) and translates the encoded message by selecting cognate aminoacyl-transfer RNA (tRNA) molecules. The large subunit (LSU) contains the ribosomal catalytic site termed the peptidyl transferase center (PTC), which catalyzes the formation of peptide bonds, thereby polymerizing the amino acids delivered by tRNAs into a polypeptide chain. The nascent polypeptides leave the ribosome through a tunnel in the LSU and interact with protein factors that function in enzymatic processing, targeting, and the membrane insertion of nascent chains at the exit of the ribosomal tunnel. As part of the LSU, it is probably required for its formation and the maturation of rRNAs. The protein is Large ribosomal subunit protein eL13 (rpl-13) of Caenorhabditis elegans.